Consider the following 265-residue polypeptide: 4-hydroxy-tetrahydrodipicolinate reductase (265 aa).

Residues 7–12, aspartate 33, 96–98, and 120–123 contribute to the NAD(+) site; these read GASGRM, GTT, and AANF. Histidine 153 acts as the Proton donor/acceptor in catalysis. A (S)-2,3,4,5-tetrahydrodipicolinate-binding site is contributed by histidine 154. Residue lysine 157 is the Proton donor of the active site. 163–164 is a (S)-2,3,4,5-tetrahydrodipicolinate binding site; it reads GT.

The protein belongs to the DapB family.

The protein localises to the cytoplasm. The catalysed reaction is (S)-2,3,4,5-tetrahydrodipicolinate + NAD(+) + H2O = (2S,4S)-4-hydroxy-2,3,4,5-tetrahydrodipicolinate + NADH + H(+). The enzyme catalyses (S)-2,3,4,5-tetrahydrodipicolinate + NADP(+) + H2O = (2S,4S)-4-hydroxy-2,3,4,5-tetrahydrodipicolinate + NADPH + H(+). The protein operates within amino-acid biosynthesis; L-lysine biosynthesis via DAP pathway; (S)-tetrahydrodipicolinate from L-aspartate: step 4/4. In terms of biological role, catalyzes the conversion of 4-hydroxy-tetrahydrodipicolinate (HTPA) to tetrahydrodipicolinate. The sequence is that of 4-hydroxy-tetrahydrodipicolinate reductase from Cupriavidus taiwanensis (strain DSM 17343 / BCRC 17206 / CCUG 44338 / CIP 107171 / LMG 19424 / R1) (Ralstonia taiwanensis (strain LMG 19424)).